A 500-amino-acid chain; its full sequence is NAD(P)H-quinone oxidoreductase chain 4, chloroplastic (500 aa).

A run of 14 helical transmembrane segments spans residues 4-24 (FPWL…MLFL), 35-55 (YTIC…CYNF), 87-107 (IGTI…AFPV), 113-130 (LFHF…GSFS), 134-154 (LLLF…LLSM), 167-187 (FILY…GISL), 211-231 (IILY…IPLH), 242-262 (HYST…YGLV), 272-292 (AHSL…IYAA), 305-325 (IAYS…SITD), 330-350 (GAIL…FLAG), 386-406 (LALP…GIIT), 416-436 (IFII…LLSM), and 462-482 (LFLS…PDFV).

It belongs to the complex I subunit 4 family.

It localises to the plastid. The protein localises to the chloroplast thylakoid membrane. It catalyses the reaction a plastoquinone + NADH + (n+1) H(+)(in) = a plastoquinol + NAD(+) + n H(+)(out). The catalysed reaction is a plastoquinone + NADPH + (n+1) H(+)(in) = a plastoquinol + NADP(+) + n H(+)(out). This Aethionema cordifolium (Lebanon stonecress) protein is NAD(P)H-quinone oxidoreductase chain 4, chloroplastic.